The following is a 339-amino-acid chain: Serine racemase (339 aa).

A Mg(2+)-binding site is contributed by glutamate 13. Serine 31, serine 32, isoleucine 33, lysine 51, and threonine 52 together coordinate ATP. Catalysis depends on lysine 56, which acts as the Proton acceptor. Lysine 56 is subject to N6-(pyridoxal phosphate)lysine. Proline 69 is a Ca(2+) binding site. Phosphothreonine is present on threonine 71. Ca(2+) is bound at residue threonine 81. The active-site Proton acceptor is serine 84. Position 86 (asparagine 86) interacts with pyridoxal 5'-phosphate. Residue glutamine 89 participates in ATP binding. Cysteine 113 is modified (S-nitrosocysteine). Tyrosine 121 is a binding site for ATP. Asparagine 154 provides a ligand contact to pyridoxal 5'-phosphate. Aspartate 178 is a binding site for Mg(2+). Residues glycine 185, glycine 186, glycine 187, glycine 188, and methionine 189 each coordinate pyridoxal 5'-phosphate. Glutamate 210, alanine 214, aspartate 216, and asparagine 247 together coordinate Mg(2+). Glutamate 210, alanine 214, aspartate 216, and asparagine 247 together coordinate Ca(2+). Mn(2+) is bound by residues glutamate 210, alanine 214, and aspartate 216. Lysine 279 provides a ligand contact to ATP. Serine 313 provides a ligand contact to pyridoxal 5'-phosphate. Asparagine 316 serves as a coordination point for ATP.

The protein belongs to the serine/threonine dehydratase family. In terms of assembly, homodimer. Requires Mg(2+) as cofactor. The cofactor is Mn(2+). Ca(2+) serves as cofactor. It depends on pyridoxal 5'-phosphate as a cofactor. Post-translationally, S-nitrosylated, leading to decrease the enzyme activity. In terms of tissue distribution, expressed in the hippocampus (at protein level). Expressed in the small intestine.

The catalysed reaction is L-serine = D-serine. The enzyme catalyses D-serine = pyruvate + NH4(+). It catalyses the reaction L-serine = pyruvate + NH4(+). With respect to regulation, allosterically activated by magnesium, and possibly also other divalent metal cations. Allosterically activated by ATP, ADP or GTP. Functionally, catalyzes the synthesis of D-serine from L-serine. D-serine is a key coagonist with glutamate at NMDA receptors. Has dehydratase activity towards both L-serine and D-serine. The chain is Serine racemase (Srr) from Mus musculus (Mouse).